The following is a 693-amino-acid chain: Elongation factor G (693 aa).

A tr-type G domain is found at 9–283 (ERVRNIGIIA…AVCDYLPSPL (275 aa)). GTP contacts are provided by residues 18-25 (AHIDAGKT), 82-86 (DTPGH), and 136-139 (NKMD).

This sequence belongs to the TRAFAC class translation factor GTPase superfamily. Classic translation factor GTPase family. EF-G/EF-2 subfamily.

The protein localises to the cytoplasm. Its function is as follows. Catalyzes the GTP-dependent ribosomal translocation step during translation elongation. During this step, the ribosome changes from the pre-translocational (PRE) to the post-translocational (POST) state as the newly formed A-site-bound peptidyl-tRNA and P-site-bound deacylated tRNA move to the P and E sites, respectively. Catalyzes the coordinated movement of the two tRNA molecules, the mRNA and conformational changes in the ribosome. The chain is Elongation factor G from Dehalococcoides mccartyi (strain ATCC BAA-2100 / JCM 16839 / KCTC 5957 / BAV1).